The primary structure comprises 314 residues: Homoserine kinase (314 aa).

95–105 (PHSRGLGSSAS) serves as a coordination point for ATP.

This sequence belongs to the GHMP kinase family. Homoserine kinase subfamily.

It localises to the cytoplasm. The catalysed reaction is L-homoserine + ATP = O-phospho-L-homoserine + ADP + H(+). Its pathway is amino-acid biosynthesis; L-threonine biosynthesis; L-threonine from L-aspartate: step 4/5. In terms of biological role, catalyzes the ATP-dependent phosphorylation of L-homoserine to L-homoserine phosphate. This Rhodococcus erythropolis (strain PR4 / NBRC 100887) protein is Homoserine kinase.